The chain runs to 418 residues: Sonic hedgehog protein (418 aa).

The signal sequence occupies residues 1-23 (MRLLTRVLLVSLLTLSLVVSGLA). The N-palmitoyl cysteine moiety is linked to residue cysteine 24. Residues 32 to 38 (RRRHPKK) carry the Cardin-Weintraub motif. Residues glutamate 89, glutamate 90, aspartate 95, threonine 125, glutamate 126, aspartate 129, and aspartate 131 each coordinate Ca(2+). Residues histidine 140, aspartate 147, and histidine 182 each contribute to the Zn(2+) site. Glycine 197 is lipidated: Cholesterol glycine ester.

This sequence belongs to the hedgehog family. In terms of assembly, interacts with HHATL/GUP1 which negatively regulates HHAT-mediated palmitoylation of the SHH N-terminus. Interacts with BOC and CDON. Interacts with HHIP. Interacts with DISP1 via its cholesterol anchor. Interacts with SCUBE2. Multimer. The C-terminal domain displays an autoproteolysis activity and a cholesterol transferase activity. Both activities result in the cleavage of the full-length protein and covalent attachment of a cholesterol moiety to the C-terminal of the newly generated N-terminal fragment (ShhN). Cholesterylation is required for the sonic hedgehog protein N-product targeting to lipid rafts and multimerization. ShhN is the active species in both local and long-range signaling, whereas the C-product (ShhC) is degraded in the reticulum endoplasmic. Post-translationally, N-palmitoylation by HHAT of ShhN is required for sonic hedgehog protein N-product multimerization and full activity. It is a prerequisite for the membrane-proximal positioning and the subsequent shedding of this N-terminal peptide. In terms of processing, the lipidated N- and C-terminal peptides of ShhNp can be cleaved (shedding). The N-terminal palmitoylated peptide is cleaved at the Cardin-Weintraub (CW) motif site. The cleavage reduced the interactions with heparan sulfate. The cleavage is enhanced by SCUBE2. As to expression, expressed in the ventral midline of the neural tube and brain. Also found in the notochord and in developing fin bud. In the developing brain, expression occurs in domains that include a discrete region in the floor of the diencephalon.

It localises to the endoplasmic reticulum membrane. The protein localises to the golgi apparatus membrane. The protein resides in the cell membrane. It catalyses the reaction glycyl-L-cysteinyl-[protein] + cholesterol + H(+) = [protein]-C-terminal glycyl cholesterol ester + N-terminal L-cysteinyl-[protein]. Functionally, the C-terminal part of the sonic hedgehog protein precursor displays an autoproteolysis and a cholesterol transferase activity. Both activities result in the cleavage of the full-length protein into two parts (ShhN and ShhC) followed by the covalent attachment of a cholesterol moiety to the C-terminal of the newly generated ShhN. Both activities occur in the endoplasmic reticulum. Once cleaved, ShhC is degraded in the endoplasmic reticulum. In terms of biological role, the dually lipidated sonic hedgehog protein N-product (ShhNp) is a morphogen which is essential for a variety of patterning events during development. Involved in dorso-ventral patterning of the brain and in early patterning of the developing eyes. Binds to the patched (PTCH1) receptor, which functions in association with smoothened (SMO), to activate the transcription of target genes. In the absence of SHH, PTCH1 represses the constitutive signaling activity of SMO. The polypeptide is Sonic hedgehog protein (shha) (Danio rerio (Zebrafish)).